The chain runs to 463 residues: Glutamate--tRNA ligase 1 (463 aa).

A 'HIGH' region motif is present at residues 10 to 20; it reads PSPTGYLHIGG. The 'KMSKS' region motif lies at 238–242; that stretch reads KLSKR. Lys241 serves as a coordination point for ATP.

This sequence belongs to the class-I aminoacyl-tRNA synthetase family. Glutamate--tRNA ligase type 1 subfamily. In terms of assembly, monomer.

It localises to the cytoplasm. It carries out the reaction tRNA(Glu) + L-glutamate + ATP = L-glutamyl-tRNA(Glu) + AMP + diphosphate. In terms of biological role, catalyzes the attachment of glutamate to tRNA(Glu) in a two-step reaction: glutamate is first activated by ATP to form Glu-AMP and then transferred to the acceptor end of tRNA(Glu). The sequence is that of Glutamate--tRNA ligase 1 from Helicobacter pylori (strain G27).